Consider the following 141-residue polypeptide: Large ribosomal subunit protein uL13 (141 aa).

Belongs to the universal ribosomal protein uL13 family. In terms of assembly, part of the 50S ribosomal subunit.

Its function is as follows. This protein is one of the early assembly proteins of the 50S ribosomal subunit, although it is not seen to bind rRNA by itself. It is important during the early stages of 50S assembly. The protein is Large ribosomal subunit protein uL13 of Helicobacter pylori (strain Shi470).